The sequence spans 558 residues: Serine/threonine-protein phosphatase 2B catalytic subunit (558 aa).

Residues aspartate 128, histidine 130, and aspartate 156 each coordinate Fe cation. Zn(2+)-binding residues include aspartate 156 and asparagine 188. The active-site Proton donor is histidine 189. Residues histidine 237 and histidine 319 each coordinate Zn(2+). Disordered stretches follow at residues 415–439 and 534–558; these read LREDSATTSPGSASPALPSAANQDP and ALERATREADNDKKLQTLSRRLSTS. Positions 420-435 are enriched in low complexity; it reads ATTSPGSASPALPSAA. Residues 534–548 are compositionally biased toward basic and acidic residues; sequence ALERATREADNDKKL. Polar residues predominate over residues 549–558; sequence QTLSRRLSTS.

This sequence belongs to the PPP phosphatase family. PP-2B subfamily. As to quaternary structure, composed of two components (A and B), the A component is the catalytic subunit and the B component confers calcium sensitivity. Fe(3+) is required as a cofactor. Requires Zn(2+) as cofactor.

The catalysed reaction is O-phospho-L-seryl-[protein] + H2O = L-seryl-[protein] + phosphate. The enzyme catalyses O-phospho-L-threonyl-[protein] + H2O = L-threonyl-[protein] + phosphate. Calcium-dependent, calmodulin-stimulated protein phosphatase. This subunit may have a role in the calmodulin activation of calcineurin. This is Serine/threonine-protein phosphatase 2B catalytic subunit (cna-1) from Neurospora crassa (strain ATCC 24698 / 74-OR23-1A / CBS 708.71 / DSM 1257 / FGSC 987).